We begin with the raw amino-acid sequence, 639 residues long: Methyl-accepting chemotaxis protein McpS (639 aa).

The Cytoplasmic segment spans residues 1 to 13 (MNSWFANISVNLK). A helical membrane pass occupies residues 14 to 34 (LGLGFGLVLVLTGLLALTGWT). At 35-288 (SLGSLIDRSN…RDIESTQARS (254 aa)) the chain is on the periplasmic side. Residues 41 to 283 (DRSNWMGDIG…IQLERRDIES (243 aa)) form the HBM domain. Residue 60–65 (RIARLQ) participates in (S)-malate binding. Position 60 to 65 (60 to 65 (RIARLQ)) interacts with succinate. Residues aspartate 138, arginine 183, arginine 187, and tyrosine 236 each contribute to the acetate site. The stretch at 191–245 (AENSSANEQAALRQLDAALADTDNLKRQLPSEDARLQQFENAVLAYRDAVRQFRD) forms a coiled coil. (S)-malate is bound by residues arginine 254 and threonine 258. Arginine 254 is a binding site for succinate. The chain crosses the membrane as a helical span at residues 289-309 (LQAIATLLALLVGVLAAVLIT). In terms of domain architecture, HAMP spans 310 to 362 (RQITRPLQDTLVAVEKIASGDLTQHMRVTRRDELGVLQQGIARMGTTLRELIS). At 310–639 (RQITRPLQDT…LQTLVSQFRV (330 aa)) the chain is on the cytoplasmic side. The region spanning 367 to 603 (GVTQIASAAE…EISRSILNVR (237 aa)) is the Methyl-accepting transducer domain.

This sequence belongs to the methyl-accepting chemotaxis (MCP) protein family. Homodimer. Exists as a mixture of monomers and dimers in solution. Ligand binding stabilizes the dimeric form. Post-translationally, methylated by CheR2.

It is found in the cell membrane. Its activity is regulated as follows. Binding of citrate to the ligand-binding domain reduces the chemotaxis towards the strong attractants such as malate and succinate. However, in physiologically relevant niches, citrate is mostly complexed with magnesium or calcium ions, and does not bind McpS. Chemotactic-signal transducers respond to changes in the concentration of attractants and repellents in the environment, transduce a signal from the outside to the inside of the cell, and facilitate sensory adaptation through the variation of the level of methylation. McpS is a specific chemoreceptor for 6 tricarboxylic acid (TCA) cycle intermediates (succinate, fumarate, malate, oxaloacetate, citrate and isocitrate), butyrate and acetate. Malate, succinate, fumarate and oxaloacetate cause the strongest chemotactic response. The sequence is that of Methyl-accepting chemotaxis protein McpS (mcpS) from Pseudomonas putida (strain ATCC 47054 / DSM 6125 / CFBP 8728 / NCIMB 11950 / KT2440).